Reading from the N-terminus, the 496-residue chain is E3 ubiquitin-protein ligase XIAP (496 aa).

BIR repeat units lie at residues 26 to 93, 163 to 230, and 264 to 329; these read EFNR…CRFI, EEAR…CFFV, and YDAR…CKYL. Residues C299, C302, and H319 each contribute to the Zn(2+) site. Residue K321 forms a Glycyl lysine isopeptide (Lys-Gly) (interchain with G-Cter in ubiquitin) linkage. A Zn(2+)-binding site is contributed by C326. K327 participates in a covalent cross-link: Glycyl lysine isopeptide (Lys-Gly) (interchain with G-Cter in ubiquitin). C449 carries the S-nitrosocysteine modification. The RING-type zinc-finger motif lies at 449-484; sequence CKICMDRNIAIVFVPCGHLVTCKQCAEAVDKCPMCC.

It belongs to the IAP family. As to quaternary structure, monomer, and homodimer. Interacts (via BIR3 domain) with DIABLO/SMAC; the interaction inhibits apoptotic suppressor activity. Interacts with HTRA2/PRSS25; the interaction inhibits apoptotic suppressor activity. Interacts with TAB1/MAP3K7IP1 and AIFM1. Interaction with DIABLO/SMAC hinders binding of TAB1/MAP3K7IP1 and AIFM1. Interacts with TCF25 and COMMD1. Interacts (via BIR3 domain) with SEPTIN4. Interacts with RIP1, RIP2, RIP3, RIP4, CCS and USP19. Interacts (via BIR 2 domain and BIR 3 domain) with HAX1 (via C-terminus) and this interaction blocks ubiquitination of XIAP/BIRC4. Interacts with the monomeric form of BIRC5/survivin. Interacts with TLE3 and TCF7L2/TCF4. Interacts (via BIR 3 and RING domains) with PDCL3. S-Nitrosylation down-regulates its E3 ubiquitin-protein ligase activity. Post-translationally, autoubiquitinated. Ubiquitinated by TRIM32; leading to proteasomal degradation.

The protein resides in the cytoplasm. It is found in the nucleus. The enzyme catalyses S-ubiquitinyl-[E2 ubiquitin-conjugating enzyme]-L-cysteine + [acceptor protein]-L-lysine = [E2 ubiquitin-conjugating enzyme]-L-cysteine + N(6)-ubiquitinyl-[acceptor protein]-L-lysine.. In terms of biological role, multi-functional protein which regulates not only caspases and apoptosis, but also modulates inflammatory signaling and immunity, copper homeostasis, mitogenic kinase signaling, cell proliferation, as well as cell invasion and metastasis. Acts as a direct caspase inhibitor. Directly bind to the active site pocket of CASP3 and CASP7 and obstructs substrate entry. Inactivates CASP9 by keeping it in a monomeric, inactive state. Acts as an E3 ubiquitin-protein ligase regulating NF-kappa-B signaling and the target proteins for its E3 ubiquitin-protein ligase activity include: RIPK1, RIPK2, MAP3K2/MEKK2, DIABLO/SMAC, AIFM1, CCS, PTEN and BIRC5/survivin. Acts as an important regulator of innate immunity by mediating 'Lys-63'-linked polyubiquitination of RIPK2 downstream of NOD1 and NOD2, thereby transforming RIPK2 into a scaffolding protein for downstream effectors, ultimately leading to activation of the NF-kappa-B and MAP kinases signaling. 'Lys-63'-linked polyubiquitination of RIPK2 also promotes recruitment of the LUBAC complex to RIPK2. Regulates the BMP signaling pathway and the SMAD and MAP3K7/TAK1 dependent pathways leading to NF-kappa-B and JNK activation. Ubiquitination of CCS leads to enhancement of its chaperone activity toward its physiologic target, SOD1, rather than proteasomal degradation. Ubiquitination of MAP3K2/MEKK2 and AIFM1 does not lead to proteasomal degradation. Plays a role in copper homeostasis by ubiquitinating COMMD1 and promoting its proteasomal degradation. Can also function as E3 ubiquitin-protein ligase of the NEDD8 conjugation pathway, targeting effector caspases for neddylation and inactivation. Ubiquitinates and therefore mediates the proteasomal degradation of BCL2 in response to apoptosis. Protects cells from spontaneous formation of the ripoptosome, a large multi-protein complex that has the capability to kill cancer cells in a caspase-dependent and caspase-independent manner. Suppresses ripoptosome formation by ubiquitinating RIPK1 and CASP8. Acts as a positive regulator of Wnt signaling and ubiquitinates TLE1, TLE2, TLE3, TLE4 and AES. Ubiquitination of TLE3 results in inhibition of its interaction with TCF7L2/TCF4 thereby allowing efficient recruitment and binding of the transcriptional coactivator beta-catenin to TCF7L2/TCF4 that is required to initiate a Wnt-specific transcriptional program. The polypeptide is E3 ubiquitin-protein ligase XIAP (Xiap) (Rattus norvegicus (Rat)).